Reading from the N-terminus, the 244-residue chain is Tetraspanin-1 (244 aa).

Helical transmembrane passes span 11-31 (VLFFLDLAMLLAALALIAVGF), 67-87 (LIVVFWSIIGLSLGAVVTAVL), 104-124 (YLVLIIVLVSLEIGCGVAVLV), and 198-218 (ILLVILILQTIAIILPVPILI).

This sequence belongs to the tetraspanin (TM4SF) family.

The protein resides in the membrane. This chain is Tetraspanin-1 (tsp-1), found in Caenorhabditis elegans.